Consider the following 465-residue polypeptide: Cytochrome P450 85A1 (465 aa).

A helical membrane pass occupies residues 2–22 (GAMMVMMGLLLIIVSLCSALL). C415 contributes to the heme binding site.

The protein belongs to the cytochrome P450 family. Heme serves as cofactor. In terms of tissue distribution, mainly expressed in apical shoots, hypocotyls, siliques and roots. Also present in the female gametophyte.

The protein localises to the membrane. It carries out the reaction 6-deoxoteasterone + reduced [NADPH--hemoprotein reductase] + O2 = 6alpha-hydroxyteasterone + oxidized [NADPH--hemoprotein reductase] + H2O + H(+). It catalyses the reaction 6alpha-hydroxytyphasterol + reduced [NADPH--hemoprotein reductase] + O2 = teasterone + oxidized [NADPH--hemoprotein reductase] + 2 H2O + H(+). The enzyme catalyses 3-dehydro-6-deoxoteasterone + reduced [NADPH--hemoprotein reductase] + O2 = 3-dehydro-6alpha-hydroxyteasterone + oxidized [NADPH--hemoprotein reductase] + H2O + H(+). The catalysed reaction is 3-dehydro-6alpha-hydroxyteasterone + reduced [NADPH--hemoprotein reductase] + O2 = 3-dehydroteasterone + oxidized [NADPH--hemoprotein reductase] + 2 H2O + H(+). It carries out the reaction 6-deoxotyphasterol + reduced [NADPH--hemoprotein reductase] + O2 = 6alpha-hydroxytyphasterol + oxidized [NADPH--hemoprotein reductase] + H2O + H(+). It catalyses the reaction 6alpha-hydroxytyphasterol + reduced [NADPH--hemoprotein reductase] + O2 = typhasterol + oxidized [NADPH--hemoprotein reductase] + 2 H2O + H(+). The enzyme catalyses 6-deoxocastasterone + reduced [NADPH--hemoprotein reductase] + O2 = 6alpha-hydroxycastasterone + oxidized [NADPH--hemoprotein reductase] + H2O + H(+). The catalysed reaction is 6alpha-hydroxycastasterone + reduced [NADPH--hemoprotein reductase] + O2 = castasterone + oxidized [NADPH--hemoprotein reductase] + 2 H2O + H(+). It carries out the reaction 6-deoxocastasterone + 2 reduced [NADPH--hemoprotein reductase] + 2 O2 = castasterone + 2 oxidized [NADPH--hemoprotein reductase] + 3 H2O + 2 H(+). It catalyses the reaction 6-deoxoteasterone + 2 reduced [NADPH--hemoprotein reductase] + 2 O2 = teasterone + 2 oxidized [NADPH--hemoprotein reductase] + 3 H2O + 2 H(+). The enzyme catalyses 6-deoxotyphasterol + 2 reduced [NADPH--hemoprotein reductase] + 2 O2 = typhasterol + 2 oxidized [NADPH--hemoprotein reductase] + 3 H2O + 2 H(+). The catalysed reaction is 3-dehydro-6-deoxoteasterone + 2 reduced [NADPH--hemoprotein reductase] + 2 O2 = 3-dehydroteasterone + 2 oxidized [NADPH--hemoprotein reductase] + 3 H2O + 2 H(+). Its pathway is plant hormone biosynthesis; brassinosteroid biosynthesis. Its function is as follows. Catalyzes the C6-oxidation step in brassinosteroids biosynthesis. Converts 6-deoxocastasterone (6-deoxoCS) to castasterone (CS). May also convert 6-deoxoteasterone (6-deoxoTE) to teasterone (TE), 3-dehydro-6-deoxoteasterone (6-deoxo3DT, 6-deoxo-3-DHT) to 3-dehydroteasterone (3DT, 3-DHT), and 6-deoxotyphasterol (6-deoxoTY) to typhasterol (TY). Required for the initiation of female gametogenesis (megagametogenesis). This Arabidopsis thaliana (Mouse-ear cress) protein is Cytochrome P450 85A1.